A 211-amino-acid polypeptide reads, in one-letter code: Urease accessory protein UreG (211 aa).

13–20 contacts GTP; the sequence is GPVGSGKT.

It belongs to the SIMIBI class G3E GTPase family. UreG subfamily. Homodimer. UreD, UreF and UreG form a complex that acts as a GTP-hydrolysis-dependent molecular chaperone, activating the urease apoprotein by helping to assemble the nickel containing metallocenter of UreC. The UreE protein probably delivers the nickel.

The protein localises to the cytoplasm. In terms of biological role, facilitates the functional incorporation of the urease nickel metallocenter. This process requires GTP hydrolysis, probably effectuated by UreG. The protein is Urease accessory protein UreG of Alkalilimnicola ehrlichii (strain ATCC BAA-1101 / DSM 17681 / MLHE-1).